Consider the following 130-residue polypeptide: uncharacterized protein (130 aa).

The first 23 residues, 1-23 (MINRKVVYALSALLLFVYSYAFI), serve as a signal peptide directing secretion.

This is an uncharacterized protein from Aquifex aeolicus (strain VF5).